The following is a 281-amino-acid chain: NADPH-dependent 7-cyano-7-deazaguanine reductase (281 aa).

81 to 83 contributes to the substrate binding site; that stretch reads IES. Residue 83 to 84 coordinates NADPH; that stretch reads SK. Cysteine 188 (thioimide intermediate) is an active-site residue. The active-site Proton donor is the aspartate 195. 227 to 228 lines the substrate pocket; it reads HE. 256 to 257 contacts NADPH; it reads RG.

The protein belongs to the GTP cyclohydrolase I family. QueF type 2 subfamily. As to quaternary structure, homodimer.

It is found in the cytoplasm. The catalysed reaction is 7-aminomethyl-7-carbaguanine + 2 NADP(+) = 7-cyano-7-deazaguanine + 2 NADPH + 3 H(+). It participates in tRNA modification; tRNA-queuosine biosynthesis. Catalyzes the NADPH-dependent reduction of 7-cyano-7-deazaguanine (preQ0) to 7-aminomethyl-7-deazaguanine (preQ1). This is NADPH-dependent 7-cyano-7-deazaguanine reductase from Polaromonas naphthalenivorans (strain CJ2).